Reading from the N-terminus, the 359-residue chain is Peptide chain release factor 1 (359 aa).

Glutamine 235 is subject to N5-methylglutamine. The interval alanine 287–phenylalanine 312 is disordered.

The protein belongs to the prokaryotic/mitochondrial release factor family. Post-translationally, methylated by PrmC. Methylation increases the termination efficiency of RF1.

The protein resides in the cytoplasm. Functionally, peptide chain release factor 1 directs the termination of translation in response to the peptide chain termination codons UAG and UAA. This chain is Peptide chain release factor 1, found in Chlamydia trachomatis serovar L2 (strain ATCC VR-902B / DSM 19102 / 434/Bu).